The following is a 166-amino-acid chain: Small ribosomal subunit protein uS5 (166 aa).

Residues 11–74 form the S5 DRBM domain; sequence LQEKLIAVNR…EKARRNMINV (64 aa).

Belongs to the universal ribosomal protein uS5 family. Part of the 30S ribosomal subunit. Contacts proteins S4 and S8.

With S4 and S12 plays an important role in translational accuracy. In terms of biological role, located at the back of the 30S subunit body where it stabilizes the conformation of the head with respect to the body. This Mannheimia succiniciproducens (strain KCTC 0769BP / MBEL55E) protein is Small ribosomal subunit protein uS5.